Consider the following 213-residue polypeptide: MIITIFGPPGSGKGTQSSLLIAKYNLKLISVGDLLRNIISSSSELGKKIKGTVESGNLIQDEIICGLLRDQLALVDDNCLLDGFPRNLNQAHFLTQVLQEKYNRDVDIVVELQLDDNIAIDRLKNRLACLDCKNIYSVSSFKSTTCAKCKSTRLEKRIDDADMSAINKRISEYHLQMKGLREYYKGKLLTIDANLSVDEVTQEIESKISCNLV.

Residue 10–15 participates in ATP binding; it reads GSGKGT. Positions 30 to 59 are NMP; the sequence is SVGDLLRNIISSSSELGKKIKGTVESGNLI. AMP contacts are provided by residues Arg36, 57-59, 83-86, and Gln90; these read NLI and GFPR. Residues 125–160 are LID; sequence NRLACLDCKNIYSVSSFKSTTCAKCKSTRLEKRIDD. Arg126 is an ATP binding site. Zn(2+) contacts are provided by Cys129 and Cys132. 135–136 is a binding site for ATP; the sequence is IY. Zn(2+)-binding residues include Cys146 and Cys149. AMP-binding residues include Arg157 and Arg169. Leu195 provides a ligand contact to ATP.

Belongs to the adenylate kinase family. As to quaternary structure, monomer.

It localises to the cytoplasm. It catalyses the reaction AMP + ATP = 2 ADP. The protein operates within purine metabolism; AMP biosynthesis via salvage pathway; AMP from ADP: step 1/1. In terms of biological role, catalyzes the reversible transfer of the terminal phosphate group between ATP and AMP. Plays an important role in cellular energy homeostasis and in adenine nucleotide metabolism. This is Adenylate kinase from Wolbachia pipientis wMel.